We begin with the raw amino-acid sequence, 318 residues long: Small ribosomal subunit biogenesis GTPase RsgA (318 aa).

A compositionally biased stretch (basic residues) spans Met-1–Ala-16. The disordered stretch occupies residues Met-1–His-21. In terms of domain architecture, CP-type G spans Ser-84–Phe-249. Residues Asn-133–Asp-136 and Gly-187–Ser-195 each bind GTP. Cys-273, Cys-278, His-280, and Cys-286 together coordinate Zn(2+).

Belongs to the TRAFAC class YlqF/YawG GTPase family. RsgA subfamily. In terms of assembly, monomer. Associates with 30S ribosomal subunit, binds 16S rRNA. The cofactor is Zn(2+).

Its subcellular location is the cytoplasm. In terms of biological role, one of several proteins that assist in the late maturation steps of the functional core of the 30S ribosomal subunit. Helps release RbfA from mature subunits. May play a role in the assembly of ribosomal proteins into the subunit. Circularly permuted GTPase that catalyzes slow GTP hydrolysis, GTPase activity is stimulated by the 30S ribosomal subunit. In Ralstonia nicotianae (strain ATCC BAA-1114 / GMI1000) (Ralstonia solanacearum), this protein is Small ribosomal subunit biogenesis GTPase RsgA.